We begin with the raw amino-acid sequence, 457 residues long: Cysteine--tRNA ligase (457 aa).

Cys-28 contributes to the Zn(2+) binding site. The short motif at 30–40 (PTVYDTAHIGN) is the 'HIGH' region element. Residues Cys-212, His-237, and Glu-241 each coordinate Zn(2+). The 'KMSKS' region signature appears at 270–274 (KMSKS). Lys-273 contributes to the ATP binding site.

The protein belongs to the class-I aminoacyl-tRNA synthetase family. Monomer. Requires Zn(2+) as cofactor.

It localises to the cytoplasm. It catalyses the reaction tRNA(Cys) + L-cysteine + ATP = L-cysteinyl-tRNA(Cys) + AMP + diphosphate. The protein is Cysteine--tRNA ligase of Wolbachia pipientis wMel.